A 477-amino-acid chain; its full sequence is Asparaginyl-tRNA synthetase (477 aa).

A mitochondrion-targeting transit peptide spans 1 to 14 (MLGVRCLLRSVRFC). Lys353 carries the post-translational modification N6-acetyllysine.

It belongs to the class-II aminoacyl-tRNA synthetase family. As to quaternary structure, homodimer.

The protein localises to the mitochondrion matrix. It localises to the mitochondrion. The enzyme catalyses tRNA(Asn) + L-asparagine + ATP = L-asparaginyl-tRNA(Asn) + AMP + diphosphate + H(+). Its function is as follows. Mitochondrial aminoacyl-tRNA synthetase that catalyzes the specific attachment of the asparagine amino acid (aa) to the homologous transfer RNA (tRNA), further participating in protein synthesis. The reaction occurs in a two steps: asparagine is first activated by ATP to form Asn-AMP and then transferred to the acceptor end of tRNA(Asn). This is Asparaginyl-tRNA synthetase from Homo sapiens (Human).